We begin with the raw amino-acid sequence, 205 residues long: Methylthioribulose-1-phosphate dehydratase (205 aa).

2 residues coordinate Zn(2+): His-98 and His-100.

The protein belongs to the aldolase class II family. MtnB subfamily. Zn(2+) serves as cofactor.

It catalyses the reaction 5-(methylsulfanyl)-D-ribulose 1-phosphate = 5-methylsulfanyl-2,3-dioxopentyl phosphate + H2O. Its pathway is amino-acid biosynthesis; L-methionine biosynthesis via salvage pathway; L-methionine from S-methyl-5-thio-alpha-D-ribose 1-phosphate: step 2/6. Catalyzes the dehydration of methylthioribulose-1-phosphate (MTRu-1-P) into 2,3-diketo-5-methylthiopentyl-1-phosphate (DK-MTP-1-P). In Gluconacetobacter diazotrophicus (strain ATCC 49037 / DSM 5601 / CCUG 37298 / CIP 103539 / LMG 7603 / PAl5), this protein is Methylthioribulose-1-phosphate dehydratase.